Here is a 261-residue protein sequence, read N- to C-terminus: Tyrosine phosphatase-like protein H5 (261 aa).

The region spanning 26-261 is the Tyrosine-protein phosphatase domain; it reads LIKKEHDKVL…ESVEQEYFVP (236 aa).

This sequence belongs to the protein-tyrosine phosphatase family.

The chain is Tyrosine phosphatase-like protein H5 (H6) from Microplitis demolitor bracovirus (isolate Webb) (MdBV).